Reading from the N-terminus, the 120-residue chain is NAD(P)H-quinone oxidoreductase subunit 3 (120 aa).

3 helical membrane-spanning segments follow: residues 6–26, 64–84, and 89–109; these read GYDAFLGFLLISAAVPALALV, MFALVFVIFDVETVFLYPWAV, and LGLLAFIEALIFISILIVALA.

The protein belongs to the complex I subunit 3 family. NDH-1 can be composed of about 15 different subunits; different subcomplexes with different compositions have been identified which probably have different functions.

Its subcellular location is the cellular thylakoid membrane. It carries out the reaction a plastoquinone + NADH + (n+1) H(+)(in) = a plastoquinol + NAD(+) + n H(+)(out). The enzyme catalyses a plastoquinone + NADPH + (n+1) H(+)(in) = a plastoquinol + NADP(+) + n H(+)(out). NDH-1 shuttles electrons from an unknown electron donor, via FMN and iron-sulfur (Fe-S) centers, to quinones in the respiratory and/or the photosynthetic chain. The immediate electron acceptor for the enzyme in this species is believed to be plastoquinone. Couples the redox reaction to proton translocation, and thus conserves the redox energy in a proton gradient. Cyanobacterial NDH-1 also plays a role in inorganic carbon-concentration. The protein is NAD(P)H-quinone oxidoreductase subunit 3 of Prochlorococcus marinus (strain SARG / CCMP1375 / SS120).